Here is a 163-residue protein sequence, read N- to C-terminus: Nucleotide-binding protein CGSHiGG_08790 (163 aa).

Belongs to the YajQ family.

In terms of biological role, nucleotide-binding protein. This chain is Nucleotide-binding protein CGSHiGG_08790, found in Haemophilus influenzae (strain PittGG).